A 308-amino-acid polypeptide reads, in one-letter code: Elongation factor Ts (308 aa).

Residues 80–83 form an involved in Mg(2+) ion dislocation from EF-Tu region; that stretch reads TDFV.

It belongs to the EF-Ts family.

The protein resides in the cytoplasm. Functionally, associates with the EF-Tu.GDP complex and induces the exchange of GDP to GTP. It remains bound to the aminoacyl-tRNA.EF-Tu.GTP complex up to the GTP hydrolysis stage on the ribosome. This is Elongation factor Ts from Rhizobium etli (strain CIAT 652).